We begin with the raw amino-acid sequence, 689 residues long: Glycine--tRNA ligase beta subunit (689 aa).

This sequence belongs to the class-II aminoacyl-tRNA synthetase family. As to quaternary structure, tetramer of two alpha and two beta subunits.

It is found in the cytoplasm. It carries out the reaction tRNA(Gly) + glycine + ATP = glycyl-tRNA(Gly) + AMP + diphosphate. In Pectobacterium atrosepticum (strain SCRI 1043 / ATCC BAA-672) (Erwinia carotovora subsp. atroseptica), this protein is Glycine--tRNA ligase beta subunit.